The chain runs to 1165 residues: Serine/threonine-protein kinase/endoribonuclease ireA (1165 aa).

A signal peptide spans Met-1 to Pro-27. At Gln-28–Asn-504 the chain is on the lumenal side. Asn-152 carries an N-linked (GlcNAc...) asparagine glycan. Residues Ala-505 to Ser-525 traverse the membrane as a helical segment. Topologically, residues His-526 to Glu-1165 are cytoplasmic. Residues Gln-547 to Asp-668 are disordered. Basic and acidic residues-rich tracts occupy residues Ala-591–Ser-600 and Lys-611–Asp-620. Residues Pro-637 to Lys-655 are compositionally biased toward basic residues. Positions Lys-656–Asp-668 are enriched in basic and acidic residues. The Protein kinase domain maps to Val-711 to Phe-1026. Residues Leu-717–Val-725 and Lys-739 each bind ATP. The active-site Proton acceptor is Asp-832. Residues Ala-899–Gln-919 form a disordered region. Residues Pro-1029 to Pro-1163 form the KEN domain.

Belongs to the protein kinase superfamily. Ser/Thr protein kinase family. In terms of assembly, homodimer; in response to the accumulation of unfolded proteins. It depends on Mg(2+) as a cofactor. In terms of processing, autophosphorylated mainly on serine residues.

It localises to the membrane. The catalysed reaction is L-seryl-[protein] + ATP = O-phospho-L-seryl-[protein] + ADP + H(+). It catalyses the reaction L-threonyl-[protein] + ATP = O-phospho-L-threonyl-[protein] + ADP + H(+). With respect to regulation, 8-formyl-7-hydroxy-4-methylcoumarin inhibits the endonuclease activity and prebvent the splicing if the hacA mRNA. The kinase domain is activated by trans-autophosphorylation. Kinase activity is required for activation of the endoribonuclease domain. In terms of biological role, senses unfolded proteins in the lumen of the endoplasmic reticulum (ER) via its N-terminal domain which leads to enzyme auto-activation. The active endoribonuclease domain responds by cleaving an intron from the downstream cytoplasmic mRNA hacA, allowing for the translation of a transcription factor that coordinates a series of adaptive responses that are collectively known as the unfolded protein response (UPR). In the absence of ER stress, ireA controls dual signaling circuits that are both hacA-dependent and hacA-independent and which contribute to the expression of traits that are essential for virulence. In Aspergillus fumigatus (strain ATCC MYA-4609 / CBS 101355 / FGSC A1100 / Af293) (Neosartorya fumigata), this protein is Serine/threonine-protein kinase/endoribonuclease ireA.